Here is a 226-residue protein sequence, read N- to C-terminus: Cytochrome c biogenesis ATP-binding export protein CcmA (226 aa).

The region spanning 19-226 is the ABC transporter domain; that stretch reads LRANDLAFSR…LGGAHALPPA (208 aa). 51–58 is an ATP binding site; it reads GPNGSGKS.

It belongs to the ABC transporter superfamily. CcmA exporter (TC 3.A.1.107) family. In terms of assembly, the complex is composed of two ATP-binding proteins (CcmA) and two transmembrane proteins (CcmB).

It localises to the cell inner membrane. It carries out the reaction heme b(in) + ATP + H2O = heme b(out) + ADP + phosphate + H(+). In terms of biological role, part of the ABC transporter complex CcmAB involved in the biogenesis of c-type cytochromes; once thought to export heme, this seems not to be the case, but its exact role is uncertain. Responsible for energy coupling to the transport system. This chain is Cytochrome c biogenesis ATP-binding export protein CcmA, found in Cupriavidus pinatubonensis (strain JMP 134 / LMG 1197) (Cupriavidus necator (strain JMP 134)).